Here is a 190-residue protein sequence, read N- to C-terminus: Peptidyl-tRNA hydrolase (190 aa).

Phe-14 serves as a coordination point for tRNA. His-19 functions as the Proton acceptor in the catalytic mechanism. Met-64, Asn-66, and Asn-112 together coordinate tRNA.

This sequence belongs to the PTH family. As to quaternary structure, monomer.

The protein resides in the cytoplasm. The catalysed reaction is an N-acyl-L-alpha-aminoacyl-tRNA + H2O = an N-acyl-L-amino acid + a tRNA + H(+). In terms of biological role, hydrolyzes ribosome-free peptidyl-tRNAs (with 1 or more amino acids incorporated), which drop off the ribosome during protein synthesis, or as a result of ribosome stalling. Catalyzes the release of premature peptidyl moieties from peptidyl-tRNA molecules trapped in stalled 50S ribosomal subunits, and thus maintains levels of free tRNAs and 50S ribosomes. The protein is Peptidyl-tRNA hydrolase of Staphylococcus aureus (strain Mu3 / ATCC 700698).